A 337-amino-acid chain; its full sequence is MIQKNWQELIKPNKVDFITHGSRAHATVVAEPLERGFGLTLGNALRRVLLSSLRGAAVTAVQIDGVLHEFSSIPGVREDVTDIVLNIKEIAIRMEGEGPKRMVVRKEGPGVVTAGDIQTVGDVEILNPEHAICTLDEGAEICMEFTVNTGKGYVPADRNRAEDAPIGLIPVDSLYSPVRKVSYKIENTREGQVLDYDKLTLNIETNGSVTGEDAVAYAARILQDQLSIFVNFEEPQKEAPQEQVAELAFNPALLKKVDELELSVRSANCLKNDNIVYIGDLIQKTEAEMLRTPNFGRKSLNEIKEVLASMGLHLGMEIPAWPPENIEDLAKRYEDQY.

The tract at residues 1-233 (MIQKNWQELI…DQLSIFVNFE (233 aa)) is alpha N-terminal domain (alpha-NTD). Positions 249 to 337 (FNPALLKKVD…DLAKRYEDQY (89 aa)) are alpha C-terminal domain (alpha-CTD).

The protein belongs to the RNA polymerase alpha chain family. Homodimer. The RNAP catalytic core consists of 2 alpha, 1 beta, 1 beta' and 1 omega subunit. When a sigma factor is associated with the core the holoenzyme is formed, which can initiate transcription.

The enzyme catalyses RNA(n) + a ribonucleoside 5'-triphosphate = RNA(n+1) + diphosphate. Functionally, DNA-dependent RNA polymerase catalyzes the transcription of DNA into RNA using the four ribonucleoside triphosphates as substrates. This chain is DNA-directed RNA polymerase subunit alpha, found in Brucella ovis (strain ATCC 25840 / 63/290 / NCTC 10512).